A 579-amino-acid chain; its full sequence is Mitogen-activated protein kinase kinase kinase 7 (579 aa).

The interaction with MAPK8IP1 stretch occupies residues 1–300 (MSTASAASSS…FPGADEPLQY (300 aa)). The Protein kinase domain maps to 36–291 (IEVEEVVGRG…KIMTHLMRYF (256 aa)). ATP-binding positions include 42–50 (VGRGAFGVV) and Lys-63. Lys-72 is covalently cross-linked (Glycyl lysine isopeptide (Lys-Gly) (interchain with G-Cter in ubiquitin)). Catalysis depends on Asp-156, which acts as the Proton acceptor. Residue Lys-158 forms a Glycyl lysine isopeptide (Lys-Gly) (interchain with G-Cter in ubiquitin) linkage. Residues Thr-184 and Thr-187 each carry the phosphothreonine; by autocatalysis modification. Ser-192 is subject to Phosphoserine; by autocatalysis. Residue Lys-209 forms a Glycyl lysine isopeptide (Lys-Gly) (interchain with G-Cter in ubiquitin) linkage. 2 disordered regions span residues 301–339 (PCQY…EQVP) and 354–391 (KNQA…MSAD). Polar residues predominate over residues 306 to 322 (DEGQSNSATSTGSFMDI). Low complexity-rich tracts occupy residues 323–334 (TSTNTSNKSDTN) and 361–375 (SESG…RGSS). Phosphoserine occurs at positions 367, 389, and 412. Over residues 416-425 (LTVTGTDPGQ) the composition is skewed to polar residues. The tract at residues 416 to 466 (LTVTGTDPGQVSSRSSSPSVRMITTSGPTSEKPARSHPWTPDDSTDTNGSD) is disordered. Residues 426–436 (VSSRSSSPSVR) are compositionally biased toward low complexity. Position 428 is a phosphoserine (Ser-428).

The protein belongs to the protein kinase superfamily. STE Ser/Thr protein kinase family. MAP kinase kinase kinase subfamily. Can form homodimer. Binds both upstream activators and downstream substrates in multimolecular complexes. Interacts with TAB1/MAP3K7IP1, TAB2/MAP3K7IP2 and TAB3/MAP3K7IP3. Identified in the TRIKA2 complex composed of MAP3K7/TAK1, TAB1/MAP3K7IP1 and TAB2/MAP3K7IP2. Interacts with PPM1L and PPM1B/PP2CB. Interaction with PP2A and PPP6C leads to its repressed activity. Interacts with TRAF6 and TAB1/MAP3K7IP1; during IL-1 signaling. Interacts with TAOK1 and TAOK2; interaction with TAOK2 interferes with MAP3K7 interaction with IKKA, thus preventing NF-kappa-B activation. Interacts with DYNC2I2 (via WD domains). Interacts with CYLD and RBCK1. Interacts with TGFBR1; induces MAP3K7/TAK1 activation by TRAF6. Interacts with MAPK8IP1 and SMAD6. Interacts with isoform 1 of VRK2. Interacts with DAB2; the interaction is induced by TGF-beta stimulation and may mediate TGF-beta stimulated JNK activation. Interacts with TRIM5. Part of a complex containing ITCH, NDFIP1 and MAP3K7. Interacts with IFIT5; the interaction synergizes the recruitment of IKK to MAP3K7 and enhances IKK phosphorylation. Interacts with PLEKHM1 (via N- and C-terminus). Found in a complex with SH3RF1, RAC2, MAP2K7/MKK7, MAPK8IP1/JIP1, MAPK8/JNK1 and MAPK9/JNK2. Interacts with SASH1. Interacts with RIPK1. Mg(2+) is required as a cofactor. Association with TAB1/MAP3K7IP1 promotes autophosphorylation at Ser-192 and subsequent activation. Association with TAB2/MAP3K7IP2, itself associated with free unanchored Lys-63 polyubiquitin chain, promotes autophosphorylation and subsequent activation of MAP3K7. Dephosphorylation at Ser-192 by PPM1B/PP2CB and at Thr-187 by PP2A and PPP6C leads to inactivation. In terms of processing, 'Lys-48'-linked polyubiquitination at Lys-72 is induced by TNFalpha, and leads to proteasomal degradation. Undergoes 'Lys-48'-linked polyubiquitination catalyzed by ITCH. 'Lys-63'-linked polyubiquitination at Lys-158 by TRIM8 does not lead to proteasomal degradation but contributes to autophosphorylation and activation. Deubiquitinated by CYLD, a protease that selectively cleaves 'Lys-63'-linked ubiquitin chains. Deubiquitinated by USP19; leading to negative regulation of TNF-alpha- and IL-1beta-triggered NF-kappa-B activation.

Its subcellular location is the cytoplasm. It is found in the cell membrane. The catalysed reaction is L-seryl-[protein] + ATP = O-phospho-L-seryl-[protein] + ADP + H(+). It carries out the reaction L-threonyl-[protein] + ATP = O-phospho-L-threonyl-[protein] + ADP + H(+). With respect to regulation, activated by pro-inflammatory cytokines and in response to physical and chemical stresses, including osmotic stress, oxidative stress, arsenic and ultraviolet light irradiation. Activated by 'Lys-63'-linked polyubiquitination and by autophosphorylation. Association with TAB1/MAP3K7IP1 and TAB2/MAP3K7IP2 promotes activation through autophosphorylation, whereas PPM1B/PP2CB, PP2A and PPP6C dephosphorylation leads to inactivation. Ceramides are also able to activate MAP3K7/TAK1. In terms of biological role, serine/threonine kinase which acts as an essential component of the MAP kinase signal transduction pathway. Plays an important role in the cascades of cellular responses evoked by changes in the environment. Mediates signal transduction of TRAF6, various cytokines including interleukin-1 (IL-1), transforming growth factor-beta (TGFB), TGFB-related factors like BMP2 and BMP4, toll-like receptors (TLR), tumor necrosis factor receptor CD40 and B-cell receptor (BCR). Once activated, acts as an upstream activator of the MKK/JNK signal transduction cascade and the p38 MAPK signal transduction cascade through the phosphorylation and activation of several MAP kinase kinases like MAP2K1/MEK1, MAP2K3/MKK3, MAP2K6/MKK6 and MAP2K7/MKK7. These MAP2Ks in turn activate p38 MAPKs and c-jun N-terminal kinases (JNKs); both p38 MAPK and JNK pathways control the transcription factors activator protein-1 (AP-1). Independently of MAP2Ks and p38 MAPKs, acts as a key activator of NF-kappa-B by promoting activation of the I-kappa-B-kinase (IKK) core complex. Mechanistically, recruited to polyubiquitin chains of RIPK2 and IKBKG/NEMO via TAB2/MAP3K7IP2 and TAB3/MAP3K7IP3, and catalyzes phosphorylation and activation of IKBKB/IKKB component of the IKK complex, leading to NF-kappa-B activation. In osmotic stress signaling, plays a major role in the activation of MAPK8/JNK1, but not that of NF-kappa-B. Promotes TRIM5 capsid-specific restriction activity. Phosphorylates RIPK1 at 'Ser-321' which positively regulates RIPK1 interaction with RIPK3 to promote necroptosis but negatively regulates RIPK1 kinase activity and its interaction with FADD to mediate apoptosis. Phosphorylates STING1 in response to cGAMP-activation, promoting association between STEEP1 and STING1 and STING1 translocation to COPII vesicles. The chain is Mitogen-activated protein kinase kinase kinase 7 (MAP3K7) from Bos taurus (Bovine).